The sequence spans 76 residues: Small ribosomal subunit protein uS17 (76 aa).

The protein belongs to the universal ribosomal protein uS17 family. As to quaternary structure, part of the 30S ribosomal subunit.

Functionally, one of the primary rRNA binding proteins, it binds specifically to the 5'-end of 16S ribosomal RNA. The polypeptide is Small ribosomal subunit protein uS17 (Anaplasma phagocytophilum (strain HZ)).